A 287-amino-acid polypeptide reads, in one-letter code: Protease HtpX (287 aa).

Helical transmembrane passes span 4–24 (ILLFLATNLAVVLVLSVVLNI) and 36–56 (LSGLLVMAAVFGFGGAFISLL). H143 contacts Zn(2+). E144 is a catalytic residue. Zn(2+) is bound at residue H147. The next 2 helical transmembrane spans lie at 158–178 (LMQGVVNTFVIFLSRFIANIV) and 192–212 (MVYFGVSMVLELVFGFLASFI). E221 contacts Zn(2+).

It belongs to the peptidase M48B family. The cofactor is Zn(2+).

It is found in the cell inner membrane. The protein is Protease HtpX of Vibrio cholerae serotype O1 (strain ATCC 39315 / El Tor Inaba N16961).